A 589-amino-acid chain; its full sequence is Polypeptide N-acetylgalactosaminyltransferase 4 (589 aa).

At 1-11 the chain is on the cytoplasmic side; the sequence is MLPRMLKMKTV. The chain crosses the membrane as a helical; Signal-anchor for type II membrane protein span at residues 12-31; that stretch reads GTVLAVIWLFGLAFIYVQST. Residues 32–589 are Lumenal-facing; it reads SSSLRPPGRH…WIFEKLDTYE (558 aa). The tract at residues 33–73 is disordered; the sequence is SSLRPPGRHPPPLPQLDPLIPQNPPQNDEIRPKKSAPPIPT. Disulfide bonds link C140-C369, C360-C438, C471-C488, C514-C531, and C553-C571. The interval 150–255 is catalytic subdomain A; the sequence is MQPTTVIITY…QKWLEPLLAR (106 aa). Substrate-binding residues include D191 and R216. D239 lines the Mn(2+) pocket. S240 serves as a coordination point for substrate. H241 lines the Mn(2+) pocket. The catalytic subdomain B stretch occupies residues 315–377; that stretch reads PIRSPTMAGG…PCSRVGHVFR (63 aa). W346 is a substrate binding site. Mn(2+) is bound at residue H374. R377, H380, and Y382 together coordinate substrate. In terms of domain architecture, Ricin B-type lectin spans 458 to 589; that stretch reads TPGKSFQMKI…WIFEKLDTYE (132 aa). N523 carries N-linked (GlcNAc...) asparagine glycosylation.

The protein belongs to the glycosyltransferase 2 family. GalNAc-T subfamily. The cofactor is Mn(2+).

It localises to the golgi apparatus membrane. It carries out the reaction L-seryl-[protein] + UDP-N-acetyl-alpha-D-galactosamine = a 3-O-[N-acetyl-alpha-D-galactosaminyl]-L-seryl-[protein] + UDP + H(+). The enzyme catalyses L-threonyl-[protein] + UDP-N-acetyl-alpha-D-galactosamine = a 3-O-[N-acetyl-alpha-D-galactosaminyl]-L-threonyl-[protein] + UDP + H(+). It functions in the pathway protein modification; protein glycosylation. In terms of biological role, catalyzes the initial reaction in O-linked oligosaccharide biosynthesis, the transfer of an N-acetyl-D-galactosamine residue to a serine or threonine residue on the protein receptor. The chain is Polypeptide N-acetylgalactosaminyltransferase 4 (gly-4) from Caenorhabditis elegans.